Reading from the N-terminus, the 240-residue chain is Carboxy-S-adenosyl-L-methionine synthase (240 aa).

S-adenosyl-L-methionine contacts are provided by residues Tyr-35, Gly-61–Ser-63, Asp-86–Asn-87, Asp-112–Ile-113, and Arg-194.

It belongs to the class I-like SAM-binding methyltransferase superfamily. Cx-SAM synthase family. In terms of assembly, homodimer.

The catalysed reaction is prephenate + S-adenosyl-L-methionine = carboxy-S-adenosyl-L-methionine + 3-phenylpyruvate + H2O. Functionally, catalyzes the conversion of S-adenosyl-L-methionine (SAM) to carboxy-S-adenosyl-L-methionine (Cx-SAM). In Wolinella succinogenes (strain ATCC 29543 / DSM 1740 / CCUG 13145 / JCM 31913 / LMG 7466 / NCTC 11488 / FDC 602W) (Vibrio succinogenes), this protein is Carboxy-S-adenosyl-L-methionine synthase.